The chain runs to 108 residues: Cell cycle protein GpsB (108 aa).

Positions 32–69 (LDNVIKDYENFNAQIEALKAENEALKKAKFQARNTVSA) form a coiled coil.

This sequence belongs to the GpsB family. Forms polymers through the coiled coil domains. Interacts with PBP1, MreC and EzrA.

Its subcellular location is the cytoplasm. Divisome component that associates with the complex late in its assembly, after the Z-ring is formed, and is dependent on DivIC and PBP2B for its recruitment to the divisome. Together with EzrA, is a key component of the system that regulates PBP1 localization during cell cycle progression. Its main role could be the removal of PBP1 from the cell pole after pole maturation is completed. Also contributes to the recruitment of PBP1 to the division complex. Not essential for septum formation. The polypeptide is Cell cycle protein GpsB (Streptococcus pyogenes serotype M28 (strain MGAS6180)).